The sequence spans 128 residues: Large ribosomal subunit protein bL20 (128 aa).

It belongs to the bacterial ribosomal protein bL20 family.

In terms of biological role, binds directly to 23S ribosomal RNA and is necessary for the in vitro assembly process of the 50S ribosomal subunit. It is not involved in the protein synthesizing functions of that subunit. The polypeptide is Large ribosomal subunit protein bL20 (Anaplasma phagocytophilum (strain HZ)).